The following is a 713-amino-acid chain: Ribosomal RNA large subunit methyltransferase K/L (713 aa).

Residues 43–154 enclose the THUMP domain; sequence LAYRITLWTR…NGVITIAMNF (112 aa).

The protein belongs to the methyltransferase superfamily. RlmKL family.

The protein localises to the cytoplasm. The catalysed reaction is guanosine(2445) in 23S rRNA + S-adenosyl-L-methionine = N(2)-methylguanosine(2445) in 23S rRNA + S-adenosyl-L-homocysteine + H(+). It catalyses the reaction guanosine(2069) in 23S rRNA + S-adenosyl-L-methionine = N(2)-methylguanosine(2069) in 23S rRNA + S-adenosyl-L-homocysteine + H(+). Specifically methylates the guanine in position 2445 (m2G2445) and the guanine in position 2069 (m7G2069) of 23S rRNA. This is Ribosomal RNA large subunit methyltransferase K/L from Shewanella sp. (strain MR-7).